An 86-amino-acid chain; its full sequence is Large ribosomal subunit protein bL27 (86 aa).

Gly residues predominate over residues 1-10; that stretch reads MAQKKGGGST. Positions 1–21 are disordered; it reads MAQKKGGGSTRNGRDSESKRL.

The protein belongs to the bacterial ribosomal protein bL27 family.

This Bordetella petrii (strain ATCC BAA-461 / DSM 12804 / CCUG 43448) protein is Large ribosomal subunit protein bL27.